The following is a 483-amino-acid chain: MDGAVMEGPLFLQSQRFGTKRWRKTWAVLYPASPHGVARLEFFDHKGSSSGGGRGSSRRLDCKVIRLAECVSVAPVAVESPPEPGAASFRLDTAQRSHLLAADAPSSAAWVQTLCQNAFPKGSWALAPAENPPKLSALEMLENSLYSPSWEGSQFWVTVQKTEAAERCGLHGSYVLRVEAERLTLLAPGAQRQILEPLLFWPYTLLRRYGRDKVMFSFEAGRRCPSGPGTFTFQTAQGNDIFQAVETAIHRQKIQGKAGQGQDVLRADSHEGEVADGKLASLAAPLELPGSPPALYSEPLDSLRIPPGPSQDSLYSDPLDSTPARAGEGTQLKKALYWDLCEHVQQKLIKAKLTDPKEDPIYDEPEGLAPATLRGLYDLPQEPKDAWWCQARVKEEGYELPYNPAMDDYAVPPPRSTKPFPAPKPQGLALSESGAATGSGSQGHSSDTALYSQVQKSGASGSWDCGLSGVVTDRTGAKSEGST.

Residue methionine 1 is modified to N-acetylmethionine. The region spanning 4–119 (AVMEGPLFLQ…WVQTLCQNAF (116 aa)) is the PH domain. Serine 48 is subject to Phosphoserine. Residues 151–259 (EGSQFWVTVQ…HRQKIQGKAG (109 aa)) enclose the IRS-type PTB domain. A phosphoserine mark is found at serine 269 and serine 291. A disordered region spans residues 293–326 (PALYSEPLDSLRIPPGPSQDSLYSDPLDSTPARA). Phosphotyrosine occurs at positions 296, 337, 362, 377, 398, and 409. A disordered region spans residues 409-483 (YAVPPPRSTK…RTGAKSEGST (75 aa)). The segment covering 411 to 424 (VPPPRSTKPFPAPK) has biased composition (pro residues). Phosphoserine is present on serine 416. Over residues 434–460 (GAATGSGSQGHSSDTALYSQVQKSGAS) the composition is skewed to polar residues. Tyrosine 451 carries the post-translational modification Phosphotyrosine. A Phosphoserine modification is found at serine 462.

It belongs to the DOK family. Type A subfamily. Interacts with RasGAP, INPP5D/SHIP1 and ABL1. Interacts directly with phosphorylated ITGB3. Interacts with SRMS (via the SH2 and SH3 domains). Constitutively tyrosine-phosphorylated. Phosphorylated by TEC. Phosphorylated by LYN. Phosphorylated on tyrosine residues by the insulin receptor kinase. Results in the negative regulation of the insulin signaling pathway. Phosphorylated on tyrosine residues by SRMS.

The protein resides in the cytoplasm. It localises to the nucleus. In terms of biological role, DOK proteins are enzymatically inert adaptor or scaffolding proteins. They provide a docking platform for the assembly of multimolecular signaling complexes. DOK1 appears to be a negative regulator of the insulin signaling pathway. Modulates integrin activation by competing with talin for the same binding site on ITGB3. The sequence is that of Docking protein 1 (DOK1) from Bos taurus (Bovine).